A 230-amino-acid polypeptide reads, in one-letter code: Cytidylate kinase (230 aa).

12-20 is an ATP binding site; it reads GPSGAGKGT.

The protein belongs to the cytidylate kinase family. Type 1 subfamily.

It is found in the cytoplasm. It catalyses the reaction CMP + ATP = CDP + ADP. It carries out the reaction dCMP + ATP = dCDP + ADP. This Aeromonas salmonicida (strain A449) protein is Cytidylate kinase.